We begin with the raw amino-acid sequence, 1367 residues long: DNA polymerase III PolC-type (1367 aa).

Positions 358 to 513 (FVVLDFETTG…DDARVTAQVF (156 aa)) constitute an Exonuclease domain.

The protein belongs to the DNA polymerase type-C family. PolC subfamily.

It is found in the cytoplasm. The catalysed reaction is DNA(n) + a 2'-deoxyribonucleoside 5'-triphosphate = DNA(n+1) + diphosphate. Functionally, required for replicative DNA synthesis. This DNA polymerase also exhibits 3' to 5' exonuclease activity. The sequence is that of DNA polymerase III PolC-type from Thermotoga petrophila (strain ATCC BAA-488 / DSM 13995 / JCM 10881 / RKU-1).